The chain runs to 223 residues: Ubiquitin carboxyl-terminal hydrolase isozyme L1 (223 aa).

At Met1 the chain carries N-acetylmethionine. A UCH catalytic domain is found at 2 to 221 (QLKPMEINPE…VRFSAVALCK (220 aa)). The interval 5-10 (PMEINP) is interaction with ubiquitin. Cys90 serves as the catalytic Nucleophile. A Phosphoserine modification is found at Ser125. The active-site Proton donor is the His161. Positions 211–216 (EVRFSA) are interaction with ubiquitin. Cys220 carries the S-farnesyl cysteine lipid modification. The propeptide at 221–223 (KAA) is removed in mature form.

The protein belongs to the peptidase C12 family. As to quaternary structure, monomer. Homodimer. Interacts with COPS5 and SNCA. Post-translationally, O-glycosylated.

The protein localises to the cytoplasm. Its subcellular location is the endoplasmic reticulum membrane. The enzyme catalyses Thiol-dependent hydrolysis of ester, thioester, amide, peptide and isopeptide bonds formed by the C-terminal Gly of ubiquitin (a 76-residue protein attached to proteins as an intracellular targeting signal).. Functionally, ubiquitin-protein hydrolase involved both in the processing of ubiquitin precursors and of ubiquitinated proteins. This enzyme is a thiol protease that recognizes and hydrolyzes a peptide bond at the C-terminal glycine of ubiquitin. Also binds to free monoubiquitin and may prevent its degradation in lysosomes. The homodimer may have ATP-independent ubiquitin ligase activity. This is Ubiquitin carboxyl-terminal hydrolase isozyme L1 (UCHL1) from Sus scrofa (Pig).